The chain runs to 103 residues: Cell division protein CrgA (103 aa).

The next 2 membrane-spanning stretches (helical) occupy residues 49–69 and 80–100; these read FVPLFCALMIIGLIWCVVYYL and IGAWNLGIGFALIMIGFLMTM.

Belongs to the CrgA family.

The protein localises to the cell membrane. Its function is as follows. Involved in cell division. This chain is Cell division protein CrgA, found in Bifidobacterium longum (strain NCC 2705).